Consider the following 611-residue polypeptide: MSEVKRNISLRNSTNIFTSTFSLSSNNVPKPLIGESVIKYGDEAFVYGGRDALNAQLVNDMYVVDLNTCSWKQVEYQGNQKPIPRYFHSGDLWNNKLIFFGGMGFNDDTKCLYVLNDIDIYDIETKQWSHIPGMITENQTNDDAKEVNGSDVDEKSKHLYPSARYGHLHCVLDHYLIIFCGQDLSNSYIEEINIFDLDSGKWVFKSLFNHHCGIYRSNCVVINKDSEFLQMCRPINTTQDSNEHSIGSLFFYLNYNFVNVKRQVIYLELFELDTAESEKKSAALAKDNNQSFRFLELDVTEKFLSSAMPPGLRFPAVNILGDNLILSGIYLTSSRQAFVLWVYSLDKELWLQLDMLGVLNHGSWFKCLVLDCTNRFVVFGNKTRKLTQDYNLRQSNYDHIVFIELEGYGVYRKPQMGRVTERSEQLGKLLLNGISDMEILTIERMHIPCLSRMLYKRWPAFQKIMDRAVEKNQEAFQAEVSQLGPQLTDLPFSSIHSTGSRALYMPYSFETCSAFLHYIYCGTLNGSYCTAKNLCNLLILCKGFEGLETFFAYIVHLLHGVLNRNNVKLIYETAALTGAKGLQLRALRRIARIEQGGTAISPTSPLPNLDD.

3 Kelch repeats span residues 43–91 (EAFV…HSGD), 96–149 (KLIF…EVNG), and 175–224 (YLII…VINK). Serine 604 is subject to Phosphoserine.

Essential for mating and for recognition of the mating pheromone, and for the determination of cell shape. Implicated in activation of the ras1 protein. In Schizosaccharomyces pombe (strain 972 / ATCC 24843) (Fission yeast), this protein is Protein ral2 (ral2).